Here is a 506-residue protein sequence, read N- to C-terminus: Cobyric acid synthase (506 aa).

Positions 251-448 (DITIAIVQLP…LHGLFDSDAF (198 aa)) constitute a GATase cobBQ-type domain. Cys332 serves as the catalytic Nucleophile. His440 is an active-site residue.

This sequence belongs to the CobB/CobQ family. CobQ subfamily.

The protein operates within cofactor biosynthesis; adenosylcobalamin biosynthesis. Its function is as follows. Catalyzes amidations at positions B, D, E, and G on adenosylcobyrinic A,C-diamide. NH(2) groups are provided by glutamine, and one molecule of ATP is hydrogenolyzed for each amidation. The sequence is that of Cobyric acid synthase from Salmonella arizonae (strain ATCC BAA-731 / CDC346-86 / RSK2980).